The sequence spans 522 residues: Neuropeptide FF receptor 2 (522 aa).

Over 1–147 (MNSFFGTPAA…NYYLHQPQVA (147 aa)) the chain is Extracellular. The segment at 25-49 (KEAGRERRALSVQQRGGPAWSGSLE) is disordered. Asn110, Asn122, and Asn133 each carry an N-linked (GlcNAc...) asparagine glycan. The helical transmembrane segment at 148–168 (AIFIISYFLIFFLCMMGNTVV) threads the bilayer. At 169-184 (CFIVMRNKHMHTVTNL) the chain is on the cytoplasmic side. A helical membrane pass occupies residues 185–205 (FILNLAISDLLVGIFCMPITL). Residues 206 to 221 (LDNIIAGWPFGNTMCK) lie on the Extracellular side of the membrane. A disulfide bridge links Cys220 with Cys308. Residues 222–242 (ISGLVQGISVAASVFTLVAIA) traverse the membrane as a helical segment. The Cytoplasmic segment spans residues 243 to 262 (VDRFQCVVYPFKPKLTIKTA). The helical transmembrane segment at 263 to 283 (FVIIMIIWVLAITIMSPSAVM) threads the bilayer. At 284–319 (LHVQEEKYYRVRLNSQNKTSPVYWCREDWPNQEMRK) the chain is on the extracellular side. The N-linked (GlcNAc...) asparagine glycan is linked to Asn300. A helical transmembrane segment spans residues 320-340 (IYTTVLFANIYLAPLSLIVIM). Residues 341–377 (YGRIGISLFRAAVPHTGRKNQEQWHVVSRKKQKIIKM) lie on the Cytoplasmic side of the membrane. Residues 378–398 (LLIVALLFILSWLPLWTLMML) traverse the membrane as a helical segment. The Extracellular segment spans residues 399 to 413 (SDYADLSPNELQIIN). A helical transmembrane segment spans residues 414–434 (IYIYPFAHWLAFGNSSVNPII). Over 435 to 522 (YGFFNENFRR…LKETTNSSEI (88 aa)) the chain is Cytoplasmic.

It belongs to the G-protein coupled receptor 1 family. As to expression, isoform 1 is abundant in placenta. Relatively highly expressed in thymus, testis, and small intestine. Expressed at low levels in several tissues including spleen, prostate, brain, heart, ovary, colon, kidney, lung, liver and pancreas and not expressed in skeletal muscle and leukocytes. Isoform 2 expression is highest in placenta (but at relatively low level compared to isoform 1). Very low level of expression in numerous tissues including adipose tissue and many brain regions. Isoform 3 is expressed in brain and heart and, at lower levels, in kidney, liver, lung and pancreas.

The protein resides in the cell membrane. In terms of biological role, receptor for NPAF (A-18-F-amide) and NPFF (F-8-F-amide) neuropeptides, also known as morphine-modulating peptides. Can also be activated by a variety of naturally occurring or synthetic FMRF-amide like ligands. This receptor mediates its action by association with G proteins that activate a phosphatidylinositol-calcium second messenger system. The polypeptide is Neuropeptide FF receptor 2 (Homo sapiens (Human)).